The following is a 916-amino-acid chain: MLTNIAKKIFGSRNDRLLKQYRKSVARINALEEQMQALSDADLQAKTAEFKQRLADGQTLDGILPEAFAVCREASRRTLGMRHFDVQLIGGMVLHDGKIAEMRTGEGKTLVATLAVYLNALAGKGVHVVTVNDYLASRDAGIMEPLYNFLGLTVGVIISDMQPFDRQNAYAADITYGTNNEFGFDYLRDNMVTDQYDKVQRELNFAVVDEVDSILIDEARTPLIISGQADDNIQLYQIMNTVPPHLVRQETEEGEGDYWVDEKAHQVILSEAGHEHAEQILTQMGLLAENDSLYSAANIALMHHLMAALRAHSLFHKDQHYVIQDGEIVIVDEFTGRLMSGRRWSEGLHQAVEAKEGVEIKRENQTLASITFQNYFRLYTKLSGMTGTADTEAFEFQSIYNLETVIIPTNRPVQRKDFNDQIFRSAEEKFEAVVKDIEECHKRGQPVLVGTTSIENSELVSKLLTQAGLPHNVLNAKEHEREALIVAQAGKVGAITVATNMAGRGTDIVLGGNLKHQTDAIRADETLSDEEKQAQIAALEDGWQAEHDKVMEAGGLHIIGTERHESRRIDNQLRGRSGRQGDPGSSRFYLSFEDPLLRLFALDRAAAILNRLAPERGVAIEHNLLTRQIEGAQRKVEGRNFDMRKQVLEYDDVANEQRKVIYSQRNEILTSKDISDLMQEIRSDVVSDLVDTYMPPDSMEEQWDIPTLENRLAAEFRLHEDIQSWLKADNAIDGQDIKERLIERIENEYAAKTELVGKQAMADFERNVMLQVIDNQWREHLAAMDYLRQGIHLRSYAQKNPKQEYKREAFTMFQDLWNGIKFHIASLLTSVQIEQNPVAVVEEQPIGNIQSIHSESPDMEELLGQSQTDLVTEAFNPDGTDFSPEALEARGQIVHRNDPCPCGSGLKYKQCHGKLA.

Residues glutamine 87, 105–109 (GEGKT), and aspartate 507 contribute to the ATP site. Zn(2+) contacts are provided by cysteine 900, cysteine 902, cysteine 911, and histidine 912.

It belongs to the SecA family. In terms of assembly, monomer and homodimer. Part of the essential Sec protein translocation apparatus which comprises SecA, SecYEG and auxiliary proteins SecDF-YajC and YidC. The cofactor is Zn(2+).

It is found in the cell inner membrane. The protein localises to the cytoplasm. The enzyme catalyses ATP + H2O + cellular proteinSide 1 = ADP + phosphate + cellular proteinSide 2.. Part of the Sec protein translocase complex. Interacts with the SecYEG preprotein conducting channel. Has a central role in coupling the hydrolysis of ATP to the transfer of proteins into and across the cell membrane, serving both as a receptor for the preprotein-SecB complex and as an ATP-driven molecular motor driving the stepwise translocation of polypeptide chains across the membrane. This chain is Protein translocase subunit SecA, found in Neisseria meningitidis serogroup B (strain ATCC BAA-335 / MC58).